The following is a 400-amino-acid chain: Phosphoglycerate kinase (400 aa).

Substrate-binding positions include aspartate 20–asparagine 22, arginine 35, histidine 58–arginine 61, arginine 115, and arginine 155. ATP is bound by residues glutamate 330 and glycine 356–threonine 359.

This sequence belongs to the phosphoglycerate kinase family. In terms of assembly, monomer.

It is found in the cytoplasm. It carries out the reaction (2R)-3-phosphoglycerate + ATP = (2R)-3-phospho-glyceroyl phosphate + ADP. The protein operates within carbohydrate degradation; glycolysis; pyruvate from D-glyceraldehyde 3-phosphate: step 2/5. In Haloarcula marismortui (strain ATCC 43049 / DSM 3752 / JCM 8966 / VKM B-1809) (Halobacterium marismortui), this protein is Phosphoglycerate kinase.